We begin with the raw amino-acid sequence, 507 residues long: Pyridoxine 4-oxidase (507 aa).

The Proton acceptor role is filled by His448.

It belongs to the GMC oxidoreductase family. In terms of assembly, monomer. FAD is required as a cofactor.

The catalysed reaction is pyridoxine + O2 = pyridoxal + H2O2. It functions in the pathway cofactor degradation; B6 vitamer degradation; pyridoxal from pyridoxine (oxidase route): step 1/1. In Microbacterium luteolum (Aureobacterium luteolum), this protein is Pyridoxine 4-oxidase (pno).